Reading from the N-terminus, the 493-residue chain is MAKLLMIQGTSSNCGKSLIVTALCRITKNRGIKVAPFKAQNMSLQSFITEDGGEIGLAQAIQAEAAGVVPNVHMNPVLLKPSGQQGIQIVVHGKLYKTLNSIDFYSEKKKLWENVTDSLNYLLKEHDFLIIEGAGSPAEINLLEKDIVNMAVAEYLKAPVILVGDIDRGGVFASLYGTVKLLEKYDSLFKGFIINKFRGHVDILSPGIKKLEELINKPCLGVVPYLDETGISDEDGVSMRLINFFAQKVNAPVKIVVLRLRYISNFNDFEPLRFEPDTELMYSLKKEDLLSADIIIIPGSKKTFEDLKLLRELKIDQTLRELAKNGVEIIGICGGFQMLGEKLIDPYMVESSLREFDGIGLLPVETLFYPEKITTQVEGCLCSEPSIKITGYEIHKGITYGHLGLFKITRTSMNQTLFDGIVCGNVWGTYIHGIFESDSLRRWLINRHRVKKGLNPIDYSFSWKKLKESFIDTLANTIEKNLDINRVWEIAGL.

Residues 252–440 form the GATase cobBQ-type domain; the sequence is PVKIVVLRLR…IHGIFESDSL (189 aa). Cys-333 (nucleophile) is an active-site residue. His-432 is an active-site residue.

The protein belongs to the CobB/CobQ family. CobQ subfamily.

The protein operates within cofactor biosynthesis; adenosylcobalamin biosynthesis. Its function is as follows. Catalyzes amidations at positions B, D, E, and G on adenosylcobyrinic A,C-diamide. NH(2) groups are provided by glutamine, and one molecule of ATP is hydrogenolyzed for each amidation. The protein is Cobyric acid synthase of Thermodesulfovibrio yellowstonii (strain ATCC 51303 / DSM 11347 / YP87).